A 284-amino-acid polypeptide reads, in one-letter code: Bifunctional protein FolD (284 aa).

NADP(+)-binding positions include 165–167 (GRG), T192, and V233.

The protein belongs to the tetrahydrofolate dehydrogenase/cyclohydrolase family. Homodimer.

It carries out the reaction (6R)-5,10-methylene-5,6,7,8-tetrahydrofolate + NADP(+) = (6R)-5,10-methenyltetrahydrofolate + NADPH. The enzyme catalyses (6R)-5,10-methenyltetrahydrofolate + H2O = (6R)-10-formyltetrahydrofolate + H(+). Its pathway is one-carbon metabolism; tetrahydrofolate interconversion. Catalyzes the oxidation of 5,10-methylenetetrahydrofolate to 5,10-methenyltetrahydrofolate and then the hydrolysis of 5,10-methenyltetrahydrofolate to 10-formyltetrahydrofolate. In Corynebacterium efficiens (strain DSM 44549 / YS-314 / AJ 12310 / JCM 11189 / NBRC 100395), this protein is Bifunctional protein FolD.